The following is a 415-amino-acid chain: Type II methyltransferase M.DdeI (415 aa).

Residues 1–373 enclose the SAM-dependent MTase C5-type domain; the sequence is MNIIDLFAGC…ERISWYFENI (373 aa). Cysteine 76 is a catalytic residue.

Belongs to the class I-like SAM-binding methyltransferase superfamily. C5-methyltransferase family.

It catalyses the reaction a 2'-deoxycytidine in DNA + S-adenosyl-L-methionine = a 5-methyl-2'-deoxycytidine in DNA + S-adenosyl-L-homocysteine + H(+). Functionally, a methylase that recognizes the double-stranded sequence 5'-CTNAG-3', methylates C-1 on both strands, and protects the DNA from cleavage by the DdeI endonuclease. The protein is Type II methyltransferase M.DdeI (ddeIM) of Desulfomicrobium norvegicum (strain DSM 1741 / NCIMB 8310) (Desulfovibrio baculatus (strain Norway 4)).